Reading from the N-terminus, the 526-residue chain is Protein spinster homolog 1 (526 aa).

The segment at 1–44 (MTSRRSHGDVTPFLTQADNTEEEGVRDPESQSSDEEEEEGKDHG) is disordered. 12 helical membrane passes run 59–79 (VIIV…RFTV), 98–118 (GLVQ…FGYL), 126–146 (LIMC…SFVS), 159–179 (LVGV…ADLF), 187–207 (MLSF…IVGS), 218–238 (WALR…IFVA), 272–292 (FILS…LALW), 321–341 (MIFG…GVEI), 355–375 (LVCA…LAFA), 384–404 (VFIF…ADIL), 419–439 (LQIV…IGVI), and 463–483 (MICA…ALFI).

The protein belongs to the major facilitator superfamily. Spinster (TC 2.A.1.49) family.

Its subcellular location is the lysosome membrane. The enzyme catalyses a 1-acyl-sn-glycero-3-phosphocholine(out) + H(+)(out) = a 1-acyl-sn-glycero-3-phosphocholine(in) + H(+)(in). The catalysed reaction is a 1-acyl-sn-glycero-3-phosphoethanolamine(out) + H(+)(out) = a 1-acyl-sn-glycero-3-phosphoethanolamine(in) + H(+)(in). It catalyses the reaction a 1-O-(1Z-alkenyl)-sn-glycero-3-phosphocholine(out) + H(+)(out) = a 1-O-(1Z-alkenyl)-sn-glycero-3-phosphocholine(in) + H(+)(in). It carries out the reaction a 1-O-(1Z-alkenyl)-sn-glycero-3-phosphoethanolamine(out) + H(+)(out) = a 1-O-(1Z-alkenyl)-sn-glycero-3-phosphoethanolamine(in) + H(+)(in). Functionally, mediates the rate-limiting, proton-dependent, lysosomal efflux of lysophospholipids. Selective for zwitterionic headgroups such as lysophosphatidylcholine (LPC) and lysophosphatidylethanolamine (LPE). Essential player in lysosomal homeostasis. The sequence is that of Protein spinster homolog 1 (spns1) from Xenopus laevis (African clawed frog).